Here is a 294-residue protein sequence, read N- to C-terminus: tRNA pseudouridine synthase A (294 aa).

Asp-64 serves as the catalytic Nucleophile. Tyr-122 serves as a coordination point for substrate.

Belongs to the tRNA pseudouridine synthase TruA family. In terms of assembly, homodimer.

It carries out the reaction uridine(38/39/40) in tRNA = pseudouridine(38/39/40) in tRNA. Formation of pseudouridine at positions 38, 39 and 40 in the anticodon stem and loop of transfer RNAs. This is tRNA pseudouridine synthase A from Synechococcus sp. (strain ATCC 27144 / PCC 6301 / SAUG 1402/1) (Anacystis nidulans).